The sequence spans 1241 residues: ATP-dependent helicase/nuclease subunit A (1241 aa).

Residues 12 to 485 (SQWTDDQWKA…IDLAKNFRSR (474 aa)) enclose the UvrD-like helicase ATP-binding domain. 33 to 40 (AAAGSGKT) is an ATP binding site. The region spanning 505-805 (GEIDYDADAE…RIMTIHKSKG (301 aa)) is the UvrD-like helicase C-terminal domain.

This sequence belongs to the helicase family. AddA subfamily. Heterodimer of AddA and AddB/RexB. Mg(2+) is required as a cofactor.

The enzyme catalyses Couples ATP hydrolysis with the unwinding of duplex DNA by translocating in the 3'-5' direction.. It carries out the reaction ATP + H2O = ADP + phosphate + H(+). Its function is as follows. The heterodimer acts as both an ATP-dependent DNA helicase and an ATP-dependent, dual-direction single-stranded exonuclease. Recognizes the chi site generating a DNA molecule suitable for the initiation of homologous recombination. The AddA nuclease domain is required for chi fragment generation; this subunit has the helicase and 3' -&gt; 5' nuclease activities. This chain is ATP-dependent helicase/nuclease subunit A, found in Bacillus anthracis.